Here is a 529-residue protein sequence, read N- to C-terminus: Bifunctional purine biosynthesis protein PurH (529 aa).

The 148-residue stretch at 1–148 (MQQRRPVRRA…KNHKDVAIVV (148 aa)) folds into the MGS-like domain.

The protein belongs to the PurH family.

The catalysed reaction is (6R)-10-formyltetrahydrofolate + 5-amino-1-(5-phospho-beta-D-ribosyl)imidazole-4-carboxamide = 5-formamido-1-(5-phospho-D-ribosyl)imidazole-4-carboxamide + (6S)-5,6,7,8-tetrahydrofolate. It catalyses the reaction IMP + H2O = 5-formamido-1-(5-phospho-D-ribosyl)imidazole-4-carboxamide. The protein operates within purine metabolism; IMP biosynthesis via de novo pathway; 5-formamido-1-(5-phospho-D-ribosyl)imidazole-4-carboxamide from 5-amino-1-(5-phospho-D-ribosyl)imidazole-4-carboxamide (10-formyl THF route): step 1/1. It participates in purine metabolism; IMP biosynthesis via de novo pathway; IMP from 5-formamido-1-(5-phospho-D-ribosyl)imidazole-4-carboxamide: step 1/1. This Salmonella paratyphi C (strain RKS4594) protein is Bifunctional purine biosynthesis protein PurH.